The chain runs to 290 residues: Type II secretion system protein C (290 aa).

Residues 1–28 lie on the Cytoplasmic side of the membrane; the sequence is MTLPFRDDLLSSLLARCKTVPLSRFSQP. The chain crosses the membrane as a helical span at residues 29 to 46; sequence LFWLLLLLLAHQCAGLTW. Over 47–290 the chain is Periplasmic; sequence RLLDLGSQQS…LYDVYVGLSE (244 aa).

This sequence belongs to the GSP C family.

It is found in the cell inner membrane. In terms of biological role, involved in a type II secretion system (T2SS, formerly general secretion pathway, GSP) for the export of proteins. The chain is Type II secretion system protein C (exeC) from Aeromonas salmonicida.